The following is a 198-amino-acid chain: Orotate phosphoribosyltransferase (198 aa).

5-phospho-alpha-D-ribose 1-diphosphate contacts are provided by residues R108, K109, K112, H114, and 135–143; that span reads EDVVTTGKS. 2 residues coordinate orotate: T139 and R167.

Belongs to the purine/pyrimidine phosphoribosyltransferase family. PyrE subfamily. In terms of assembly, homodimer. It depends on Mg(2+) as a cofactor.

The catalysed reaction is orotidine 5'-phosphate + diphosphate = orotate + 5-phospho-alpha-D-ribose 1-diphosphate. It functions in the pathway pyrimidine metabolism; UMP biosynthesis via de novo pathway; UMP from orotate: step 1/2. Functionally, catalyzes the transfer of a ribosyl phosphate group from 5-phosphoribose 1-diphosphate to orotate, leading to the formation of orotidine monophosphate (OMP). This Synechocystis sp. (strain ATCC 27184 / PCC 6803 / Kazusa) protein is Orotate phosphoribosyltransferase.